Consider the following 182-residue polypeptide: uncharacterized protein (182 aa).

It belongs to the staphylococcal tandem lipoprotein family.

This is an uncharacterized protein from Staphylococcus haemolyticus (strain JCSC1435).